Here is a 198-residue protein sequence, read N- to C-terminus: Protein-L-isoaspartate O-methyltransferase (198 aa).

Residue Ser-50 is part of the active site.

Belongs to the methyltransferase superfamily. L-isoaspartyl/D-aspartyl protein methyltransferase family.

Its subcellular location is the cytoplasm. It carries out the reaction [protein]-L-isoaspartate + S-adenosyl-L-methionine = [protein]-L-isoaspartate alpha-methyl ester + S-adenosyl-L-homocysteine. In terms of biological role, catalyzes the methyl esterification of L-isoaspartyl residues in peptides and proteins that result from spontaneous decomposition of normal L-aspartyl and L-asparaginyl residues. It plays a role in the repair and/or degradation of damaged proteins. The protein is Protein-L-isoaspartate O-methyltransferase of Thermosipho melanesiensis (strain DSM 12029 / CIP 104789 / BI429).